Reading from the N-terminus, the 529-residue chain is Lanosterol 14-alpha demethylase (529 aa).

Cysteine 468 is a heme binding site.

Belongs to the cytochrome P450 family. Heme serves as cofactor.

The protein resides in the membrane. It carries out the reaction a 14alpha-methyl steroid + 3 reduced [NADPH--hemoprotein reductase] + 3 O2 = a Delta(14) steroid + formate + 3 oxidized [NADPH--hemoprotein reductase] + 4 H2O + 4 H(+). It catalyses the reaction a 14alpha-methyl steroid + reduced [NADPH--hemoprotein reductase] + O2 = a 14alpha-hydroxymethyl steroid + oxidized [NADPH--hemoprotein reductase] + H2O + H(+). The catalysed reaction is a 14alpha-hydroxymethyl steroid + reduced [NADPH--hemoprotein reductase] + O2 = a 14alpha-formyl steroid + oxidized [NADPH--hemoprotein reductase] + 2 H2O + H(+). The enzyme catalyses a 14alpha-formyl steroid + reduced [NADPH--hemoprotein reductase] + O2 = a Delta(14) steroid + formate + oxidized [NADPH--hemoprotein reductase] + H2O + 2 H(+). It carries out the reaction lanosterol + 3 reduced [NADPH--hemoprotein reductase] + 3 O2 = 4,4-dimethyl-5alpha-cholesta-8,14,24-trien-3beta-ol + formate + 3 oxidized [NADPH--hemoprotein reductase] + 4 H2O + 4 H(+). It catalyses the reaction lanosterol + reduced [NADPH--hemoprotein reductase] + O2 = 32-hydroxylanosterol + oxidized [NADPH--hemoprotein reductase] + H2O + H(+). The catalysed reaction is 32-hydroxylanosterol + reduced [NADPH--hemoprotein reductase] + O2 = 32-oxolanosterol + oxidized [NADPH--hemoprotein reductase] + 2 H2O + H(+). The enzyme catalyses 32-oxolanosterol + reduced [NADPH--hemoprotein reductase] + O2 = 4,4-dimethyl-5alpha-cholesta-8,14,24-trien-3beta-ol + formate + oxidized [NADPH--hemoprotein reductase] + H2O + 2 H(+). It carries out the reaction eburicol + 3 reduced [NADPH--hemoprotein reductase] + 3 O2 = 14-demethyleburicol + formate + 3 oxidized [NADPH--hemoprotein reductase] + 4 H2O + 4 H(+). It catalyses the reaction eburicol + reduced [NADPH--hemoprotein reductase] + O2 = 32-hydroxyeburicol + oxidized [NADPH--hemoprotein reductase] + H2O + H(+). The catalysed reaction is 32-hydroxyeburicol + reduced [NADPH--hemoprotein reductase] + O2 = 32-oxoeburicol + oxidized [NADPH--hemoprotein reductase] + 2 H2O + H(+). The enzyme catalyses 32-oxoeburicol + reduced [NADPH--hemoprotein reductase] + O2 = 14-demethyleburicol + formate + oxidized [NADPH--hemoprotein reductase] + H2O + 2 H(+). It participates in steroid biosynthesis; zymosterol biosynthesis; zymosterol from lanosterol: step 1/6. Sterol 14alpha-demethylase that plays a critical role in the third module of ergosterol biosynthesis pathway, being ergosterol the major sterol component in fungal membranes that participates in a variety of functions. The third module or late pathway involves the ergosterol synthesis itself through consecutive reactions that mainly occur in the endoplasmic reticulum (ER) membrane. In filamentous fungi, during the initial step of this module, lanosterol (lanosta-8,24-dien-3beta-ol) can be metabolized to eburicol. Sterol 14alpha-demethylase catalyzes the three-step oxidative removal of the 14alpha-methyl group (C-32) of both these sterols in the form of formate, and converts eburicol and lanosterol to 14-demethyleburicol (4,4,24-trimethylergosta-8,14,24(28)-trienol) and 4,4-dimethyl-5alpha-cholesta-8,14,24-trien-3beta-ol, respectively, which are further metabolized by other enzymes in the pathway to ergosterol. Can also use substrates not intrinsic to fungi, such as 24,25-dihydrolanosterol (DHL), producing 4,4-dimethyl-8,14-cholestadien-3-beta-ol, but at lower rates than the endogenous substrates. This Eremothecium gossypii (strain ATCC 10895 / CBS 109.51 / FGSC 9923 / NRRL Y-1056) (Yeast) protein is Lanosterol 14-alpha demethylase (ERG11).